A 263-amino-acid chain; its full sequence is Probable cyclic nucleotide phosphodiesterase CPS_4178 (263 aa).

Residues aspartate 21, histidine 23, aspartate 62, asparagine 94, histidine 160, histidine 198, and histidine 200 each contribute to the Fe cation site. Residues histidine 23, aspartate 62, and 94–95 (NH) contribute to the AMP site. Histidine 200 lines the AMP pocket.

Belongs to the cyclic nucleotide phosphodiesterase class-III family. Requires Fe(2+) as cofactor.

This is Probable cyclic nucleotide phosphodiesterase CPS_4178 from Colwellia psychrerythraea (strain 34H / ATCC BAA-681) (Vibrio psychroerythus).